The sequence spans 262 residues: Acyl-[acyl-carrier-protein]--UDP-N-acetylglucosamine O-acyltransferase (262 aa).

The protein belongs to the transferase hexapeptide repeat family. LpxA subfamily. Homotrimer.

It is found in the cytoplasm. The catalysed reaction is a (3R)-hydroxyacyl-[ACP] + UDP-N-acetyl-alpha-D-glucosamine = a UDP-3-O-[(3R)-3-hydroxyacyl]-N-acetyl-alpha-D-glucosamine + holo-[ACP]. Its pathway is glycolipid biosynthesis; lipid IV(A) biosynthesis; lipid IV(A) from (3R)-3-hydroxytetradecanoyl-[acyl-carrier-protein] and UDP-N-acetyl-alpha-D-glucosamine: step 1/6. In terms of biological role, involved in the biosynthesis of lipid A, a phosphorylated glycolipid that anchors the lipopolysaccharide to the outer membrane of the cell. The sequence is that of Acyl-[acyl-carrier-protein]--UDP-N-acetylglucosamine O-acyltransferase from Paraburkholderia phytofirmans (strain DSM 17436 / LMG 22146 / PsJN) (Burkholderia phytofirmans).